The chain runs to 1382 residues: Ninein-like protein (1382 aa).

EF-hand domains are found at residues 7–42 (HYVS…LHLE) and 41–76 (LEQQ…VLSS). Residues 144–164 (ASLESVESPKSDEEAESTKEA) are disordered. A Phosphoserine modification is found at S148. Positions 150-164 (ESPKSDEEAESTKEA) are enriched in basic and acidic residues. 2 EF-hand domains span residues 196–231 (TPES…VGLQ) and 233–268 (LEKE…HEPA). 5 residues coordinate Ca(2+): D246, D248, D250, K252, and E257. Coiled coils occupy residues 384-424 (QELS…MDDC), 484-579 (AGLR…WARL), and 616-699 (IETE…QLQD). A KEN box motif is present at residues 495-497 (KEN). The short motif at 633 to 641 (RTQLETKVN) is the D-box element. Disordered regions lie at residues 857-969 (PLAW…ASCR) and 982-1006 (RARS…GALE). Low complexity predominate over residues 991–1004 (QEQASEQQARAEGA). A coiled-coil region spans residues 1046–1375 (ETKIALEREK…RALNKLVSRI (330 aa)).

Interacts with gamma-tubulin and TUBGCP4. Interacts with anaphase promoting complex/cyclosome (APC/C). Interacts with CDC20 and FZR1. Isoform 2 interacts with LCA5 and USH2A. Isoform 2 interacts with DZANK1. In terms of processing, phosphorylated by PLK1 which disrupts its centrosome association and interaction with gamma-tubulin. Ubiquitinated by the APC/C complex leading to its degradation. As to expression, expressed in KYSE-150 esophageal carcinoma, HeLa cervical carcinoma and U2OS osteosarcoma cells. Expression is regulated in a cell cycle-dependent manner and peaks during G2/M phase (at protein level). Expressed in fetal heart, skeletal muscle, liver, lung and cochlea, and in adult brain, testis, kidney and retina.

It is found in the cytoplasm. Its subcellular location is the cytoskeleton. It localises to the microtubule organizing center. The protein resides in the centrosome. Functionally, involved in the microtubule organization in interphase cells. Overexpression induces the fragmentation of the Golgi, and causes lysosomes to disperse toward the cell periphery; it also interferes with mitotic spindle assembly. Involved in vesicle transport in photoreceptor cells. May play a role in ovarian carcinogenesis. The protein is Ninein-like protein (NINL) of Homo sapiens (Human).